We begin with the raw amino-acid sequence, 348 residues long: Heat-inducible transcription repressor HrcA (348 aa).

Belongs to the HrcA family.

Negative regulator of class I heat shock genes (grpE-dnaK-dnaJ and groELS operons). Prevents heat-shock induction of these operons. This chain is Heat-inducible transcription repressor HrcA, found in Ruminiclostridium cellulolyticum (strain ATCC 35319 / DSM 5812 / JCM 6584 / H10) (Clostridium cellulolyticum).